The following is a 750-amino-acid chain: Photosystem I P700 chlorophyll a apoprotein A1 (750 aa).

The next 8 helical transmembrane spans lie at 70–93 (IFSA…FHGA), 156–179 (LYCT…FHYH), 195–219 (LNHH…HVSL), 291–309 (IAHH…GHMY), 346–369 (WHAQ…HHMY), 385–411 (LSLF…IFMV), 433–455 (AIIS…LYIH), and 531–549 (FLVH…LILL). Residues Cys573 and Cys582 each contribute to the [4Fe-4S] cluster site. 2 helical membrane passes run 589 to 610 (HVFL…HFSW) and 664 to 686 (LSAY…MFLF). A chlorophyll a'-binding site is contributed by His675. Residues Met683 and Tyr691 each contribute to the chlorophyll a site. Trp692 provides a ligand contact to phylloquinone. Residues 724–744 (AVGVTHYLLGGIATTWAFFLA) traverse the membrane as a helical segment.

Belongs to the PsaA/PsaB family. As to quaternary structure, the PsaA/B heterodimer binds the P700 chlorophyll special pair and subsequent electron acceptors. PSI consists of a core antenna complex that captures photons, and an electron transfer chain that converts photonic excitation into a charge separation. The eukaryotic PSI reaction center is composed of at least 11 subunits. P700 is a chlorophyll a/chlorophyll a' dimer, A0 is one or more chlorophyll a, A1 is one or both phylloquinones and FX is a shared 4Fe-4S iron-sulfur center. serves as cofactor.

The protein resides in the plastid. It is found in the chloroplast thylakoid membrane. It carries out the reaction reduced [plastocyanin] + hnu + oxidized [2Fe-2S]-[ferredoxin] = oxidized [plastocyanin] + reduced [2Fe-2S]-[ferredoxin]. PsaA and PsaB bind P700, the primary electron donor of photosystem I (PSI), as well as the electron acceptors A0, A1 and FX. PSI is a plastocyanin-ferredoxin oxidoreductase, converting photonic excitation into a charge separation, which transfers an electron from the donor P700 chlorophyll pair to the spectroscopically characterized acceptors A0, A1, FX, FA and FB in turn. Oxidized P700 is reduced on the lumenal side of the thylakoid membrane by plastocyanin. This chain is Photosystem I P700 chlorophyll a apoprotein A1, found in Lotus japonicus (Lotus corniculatus var. japonicus).